We begin with the raw amino-acid sequence, 193 residues long: NADPH:quinone oxidoreductase MdaB (193 aa).

FAD contacts are provided by residues 16-23, 69-72, Y108, and 124-127; these read SNGQLNDT, GWWM, and TWNA.

This sequence belongs to the oxidoreductase MdaB family. As to quaternary structure, homodimer. FAD is required as a cofactor.

Its subcellular location is the cytoplasm. The catalysed reaction is a quinone + NADPH + H(+) = a quinol + NADP(+). NADPH-specific quinone reductase. The polypeptide is NADPH:quinone oxidoreductase MdaB (Escherichia coli O157:H7).